The primary structure comprises 589 residues: MGGGGNLVDGVRRWLFQRPSSSSSSSSSNNNNNNHEQPIFNSSSFSSSSNPNHSANSGELIIEEDLDFSGLTLINVPKRNHLPMDPHKKGETEFFTEYGEANRYQIQEVVGKGSYGVVASAVDSHTGERVAIKKINDVFEHVSDATRILREIKLLRLLRHPDVVEIKHIMLPPSRREFRDIYVVFELMESDLHQVIKANDDLTPEHYQFFLYQLLRGLKYVHAANVFHRDLKPKNILANADCKLKICDFGLARVSFNDAPTAIFWTDYVATRWYRAPELCGSFFSKYTPAIDIWSVGCIFAEMLLGKPLFPGKNVVHQLDLMTDFLGTPPPESISRIRNEKARRYLSSMRKKQPVPFSHKFPKADPLALRLLERLLAFDPKDRASAEDALADPYFSGLSNSEREPTTQPISKLEFDFERKKLVKDDVRELIYREILEYHPQMLEEYLRGGDQLSFMYPSGVDRFKRQFAHLEENQGKPGAAGGGRSTALHRHHASLPRERVPAPNGETAEESSDVERRAAAAVASTLESEEADNGGGYSARNLMKSASISGSKCIGVQSKTDKEDTIAEEEDNETVAELTDKVASLHNS.

A disordered region spans residues 18-56 (RPSSSSSSSSSNNNNNNHEQPIFNSSSFSSSSNPNHSAN). Composition is skewed to low complexity over residues 20–34 (SSSS…NNNN) and 41–56 (NSSS…HSAN). The Protein kinase domain occupies 104-395 (YQIQEVVGKG…AEDALADPYF (292 aa)). ATP is bound by residues 110-118 (VGKGSYGVV) and lysine 133. Aspartate 230 (proton acceptor) is an active-site residue. Position 266 is a phosphothreonine (threonine 266). Positions 266–268 (TDY) match the TXY motif. Tyrosine 268 carries the post-translational modification Phosphotyrosine. Position 271 is a phosphothreonine (threonine 271). The tract at residues 474–589 (NQGKPGAAGG…TDKVASLHNS (116 aa)) is disordered.

The protein belongs to the protein kinase superfamily. CMGC Ser/Thr protein kinase family. MAP kinase subfamily. In terms of assembly, interacts with CAM3, CAM4 and CAM7 in an calcium-dependent manner. In terms of processing, dually phosphorylated on Thr-266 and Tyr-268, which activates the enzyme. Autophosphorylated. Ubiquitous.

The catalysed reaction is L-seryl-[protein] + ATP = O-phospho-L-seryl-[protein] + ADP + H(+). It carries out the reaction L-threonyl-[protein] + ATP = O-phospho-L-threonyl-[protein] + ADP + H(+). Its activity is regulated as follows. Activated by threonine and tyrosine phosphorylation. Activated by two independent mechanisms, the binding of CAMs in a calcium-dependent manner and the phosphorylation by MAP kinase kinase MKK3. Activated in response to mechanical wounding, hydrogen peroxide and jasmonic acid (JA). In terms of biological role, MKK3-MPK8 and CAMs-MPK8 modules negatively regulates ROS accumulation through controlling expression of the RBOHD gene during wounding. The polypeptide is Mitogen-activated protein kinase 8 (MPK8) (Arabidopsis thaliana (Mouse-ear cress)).